The following is a 184-amino-acid chain: Acyl-homoserine-lactone synthase (184 aa).

It belongs to the autoinducer synthase family.

It catalyses the reaction a fatty acyl-[ACP] + S-adenosyl-L-methionine = an N-acyl-L-homoserine lactone + S-methyl-5'-thioadenosine + holo-[ACP] + H(+). Involved in the synthesis of the acyl-homoserine lactone (AHL) signal N-(3-hydroxydodecanoyl)-L-HSL (3-hydroxy-C(12)-HSL or OH-dDHL). Required for normal biofilm development. This Acinetobacter baumannii protein is Acyl-homoserine-lactone synthase.